The sequence spans 165 residues: SsrA-binding protein (165 aa).

The interval 141 to 165 (KLHDKRQEEKRKQADREVKSALARY) is disordered. The span at 145 to 159 (KRQEEKRKQADREVK) shows a compositional bias: basic and acidic residues.

The protein belongs to the SmpB family.

Its subcellular location is the cytoplasm. Required for rescue of stalled ribosomes mediated by trans-translation. Binds to transfer-messenger RNA (tmRNA), required for stable association of tmRNA with ribosomes. tmRNA and SmpB together mimic tRNA shape, replacing the anticodon stem-loop with SmpB. tmRNA is encoded by the ssrA gene; the 2 termini fold to resemble tRNA(Ala) and it encodes a 'tag peptide', a short internal open reading frame. During trans-translation Ala-aminoacylated tmRNA acts like a tRNA, entering the A-site of stalled ribosomes, displacing the stalled mRNA. The ribosome then switches to translate the ORF on the tmRNA; the nascent peptide is terminated with the 'tag peptide' encoded by the tmRNA and targeted for degradation. The ribosome is freed to recommence translation, which seems to be the essential function of trans-translation. This chain is SsrA-binding protein, found in Prochlorococcus marinus (strain MIT 9303).